The following is a 1136-amino-acid chain: 3-O-alpha-D-galactosyl-alpha-L-arabinofuranosidase (1136 aa).

An N-terminal signal peptide occupies residues 1–36 (MGISRNRLVPGLVGLAASAAIVLPLGIGMPVSSATA). The Proton donor role is filled by glutamate 194. Glutamate 321 serves as the catalytic Nucleophile. CBM6 domains follow at residues 521–656 (QAIE…LLLY) and 669–779 (VTYP…VTTA). The BIG2 domain occupies 987–1045 (KASLKVGETLSLNASVTPDSVADKTVQWTSSDEQVATVDEHGVVKGVKAGTVTITATSV). Residues 1049–1104 (SRSGSVEVTVAEDSEQKPSGGDGDNNGEQTGKPDGNTGGQTSDSDAGADSGNNQKH) form a disordered region. Polar residues predominate over residues 1087 to 1103 (GQTSDSDAGADSGNNQK). The chain crosses the membrane as a helical span at residues 1109-1129 (GAAVAAVAGVAVLLAGAGLLL).

It belongs to the glycosyl hydrolase 39 family.

Its subcellular location is the cell membrane. It is found in the secreted. The protein resides in the cell wall. The catalysed reaction is Hydrolysis of alpha-D-Galp-(1-&gt;3)-L-Araf disaccharides from non-reducing terminals in branches of type II arabinogalactan attached to proteins.. In terms of biological role, hydrolase involved in the degradation of the gum arabic arabinogalactan protein (AGP). Catalyzes the release of 3-O-alpha-D-galactopyranosyl-L-arabinose (alpha-D-Galp-(1-&gt;3)-L-Ara) from gum arabic AGP. Can also release 3-O-beta-L-arabinopyranosyl-L-arabinose (beta-L-Arap-(1-&gt;3)-L-Ara) from gum arabic AGP and larch AGP, but the alpha-D-Galp-(1-&gt;3)-L-Ara release activity is 594-fold higher than the beta-L-Arap-(1-&gt;3)-L-Ara release activity. Exhibits no reactivity toward p-nitrophenyl (pNP)-alpha-Araf or any other tested pNP substrate. Plays a crucial role in gum arabic AGP assimilation in B.longum. The protein is 3-O-alpha-D-galactosyl-alpha-L-arabinofuranosidase of Bifidobacterium longum subsp. longum.